The chain runs to 274 residues: tRNA (guanine-N(7)-)-methyltransferase (274 aa).

The segment at 16-40 (ASASRGAATGSRGVAPAVPRGGAPA) is disordered. Residues glutamate 106, glutamate 131, aspartate 158, and aspartate 181 each contribute to the S-adenosyl-L-methionine site. Aspartate 181 is a catalytic residue. Substrate is bound by residues lysine 185, aspartate 217, and 252 to 255 (TKFE).

The protein belongs to the class I-like SAM-binding methyltransferase superfamily. TrmB family.

It carries out the reaction guanosine(46) in tRNA + S-adenosyl-L-methionine = N(7)-methylguanosine(46) in tRNA + S-adenosyl-L-homocysteine. It functions in the pathway tRNA modification; N(7)-methylguanine-tRNA biosynthesis. In terms of biological role, catalyzes the formation of N(7)-methylguanine at position 46 (m7G46) in tRNA. The polypeptide is tRNA (guanine-N(7)-)-methyltransferase (Verminephrobacter eiseniae (strain EF01-2)).